A 382-amino-acid polypeptide reads, in one-letter code: Guanine nucleotide exchange factor for Rab-3A (382 aa).

The segment covering 1–17 has biased composition (pro residues); that stretch reads MWSGPPQPDQGLPPPLA. The tract at residues 1-60 is disordered; the sequence is MWSGPPQPDQGLPPPLAAVPVPWKSTDPCQGHRESPGALVETSAGEEAQGQEGPAAAQLD. A compositionally biased stretch (low complexity) spans 45-58; sequence GEEAQGQEGPAAAQ. The stretch at 73–161 forms a coiled coil; sequence EKGSEFLKEE…AEVTALKTLV (89 aa). The disordered stretch occupies residues 166–198; it reads PASPNRELHPQLLSPTKAGPRKGHSRHKSTSST. 2 positions are modified to phosphoserine: Ser168 and Ser179. Residues 184-194 are compositionally biased toward basic residues; the sequence is GPRKGHSRHKS.

The protein belongs to the SEC2 family. Interacts with RAB3A and IHPK1 through the coiled-coil domain. This interaction is competitive. IHPK1 kinase activity is not required for this interaction.

Its function is as follows. Guanine nucleotide exchange factor (GEF) which may activate RAB3A, a GTPase that regulates synaptic vesicle exocytosis. Promotes the exchange of GDP to GTP, converting inactive GDP-bound Rab proteins into their active GTP-bound form. May also activate RAB8A and RAB8B. The chain is Guanine nucleotide exchange factor for Rab-3A (RAB3IL1) from Homo sapiens (Human).